A 276-amino-acid chain; its full sequence is DNA repair protein RecO (276 aa).

Belongs to the RecO family.

Its function is as follows. Involved in DNA repair and RecF pathway recombination. The protein is DNA repair protein RecO of Mycobacterium sp. (strain JLS).